The following is a 150-amino-acid chain: MAAKFKLLVINGPNLNMLGKREPDKYGSRTLSEIMSELTCAADSLNVELTHFQSNSEQALIERIHDTWQAIDYIIINPAAFTHTSVALRDALLSVDIPFFEVHLSNVHAREAFRHHSYFSDVAQGVICGLGAMGYHAALEAAVNQLQNSN.

The active-site Proton acceptor is the tyrosine 26. Asparagine 77, histidine 83, and aspartate 90 together coordinate substrate. Catalysis depends on histidine 103, which acts as the Proton donor. Residues 104 to 105 (LS) and arginine 114 contribute to the substrate site.

The protein belongs to the type-II 3-dehydroquinase family. In terms of assembly, homododecamer.

It carries out the reaction 3-dehydroquinate = 3-dehydroshikimate + H2O. Its pathway is metabolic intermediate biosynthesis; chorismate biosynthesis; chorismate from D-erythrose 4-phosphate and phosphoenolpyruvate: step 3/7. Its function is as follows. Catalyzes a trans-dehydration via an enolate intermediate. The protein is 3-dehydroquinate dehydratase of Pseudoalteromonas translucida (strain TAC 125).